The chain runs to 101 residues: DNA-directed RNA polymerase subunit omega (101 aa).

The span at 1-13 shows a compositional bias: low complexity; that stretch reads MSSTPAAASATPS. The tract at residues 1–22 is disordered; it reads MSSTPAAASATPSHGALPAYDT.

This sequence belongs to the RNA polymerase subunit omega family. As to quaternary structure, the RNAP catalytic core consists of 2 alpha, 1 beta, 1 beta' and 1 omega subunit. When a sigma factor is associated with the core the holoenzyme is formed, which can initiate transcription.

It carries out the reaction RNA(n) + a ribonucleoside 5'-triphosphate = RNA(n+1) + diphosphate. Functionally, promotes RNA polymerase assembly. Latches the N- and C-terminal regions of the beta' subunit thereby facilitating its interaction with the beta and alpha subunits. In Rhodococcus jostii (strain RHA1), this protein is DNA-directed RNA polymerase subunit omega.